A 395-amino-acid polypeptide reads, in one-letter code: Elongation factor Tu (395 aa).

Positions 10–204 (KPHVNIGTIG…AVDSYIPTPE (195 aa)) constitute a tr-type G domain. The interval 19–26 (GHVDHGKT) is G1. 19-26 (GHVDHGKT) provides a ligand contact to GTP. Threonine 26 contacts Mg(2+). The interval 60-64 (GITIS) is G2. Residues 81 to 84 (DCPG) are G3. GTP is bound by residues 81–85 (DCPGH) and 136–139 (NKCD). Positions 136–139 (NKCD) are G4. The tract at residues 174-176 (SAL) is G5.

The protein belongs to the TRAFAC class translation factor GTPase superfamily. Classic translation factor GTPase family. EF-Tu/EF-1A subfamily. Monomer. In terms of processing, phosphorylated on serine and/or threonine residue(s). Dephosphorylated by stp.

It localises to the cytoplasm. It catalyses the reaction GTP + H2O = GDP + phosphate + H(+). In terms of biological role, GTP hydrolase that promotes the GTP-dependent binding of aminoacyl-tRNA to the A-site of ribosomes during protein biosynthesis. This chain is Elongation factor Tu, found in Listeria innocua serovar 6a (strain ATCC BAA-680 / CLIP 11262).